A 444-amino-acid polypeptide reads, in one-letter code: Methylenetetrahydrofolate--tRNA-(uracil-5-)-methyltransferase TrmFO (444 aa).

10 to 15 is an FAD binding site; sequence GAGLAG.

The protein belongs to the MnmG family. TrmFO subfamily. Requires FAD as cofactor.

It is found in the cytoplasm. It carries out the reaction uridine(54) in tRNA + (6R)-5,10-methylene-5,6,7,8-tetrahydrofolate + NADH + H(+) = 5-methyluridine(54) in tRNA + (6S)-5,6,7,8-tetrahydrofolate + NAD(+). The enzyme catalyses uridine(54) in tRNA + (6R)-5,10-methylene-5,6,7,8-tetrahydrofolate + NADPH + H(+) = 5-methyluridine(54) in tRNA + (6S)-5,6,7,8-tetrahydrofolate + NADP(+). Its function is as follows. Catalyzes the folate-dependent formation of 5-methyl-uridine at position 54 (M-5-U54) in all tRNAs. This is Methylenetetrahydrofolate--tRNA-(uracil-5-)-methyltransferase TrmFO from Streptococcus agalactiae serotype III (strain NEM316).